The sequence spans 139 residues: MEFFRPTELREIIPLPFFSYLVPCGFPSPAADYIEQRIDLNELLVSHPSSTYFVKASGDSMIEAGISDGDLLVVDSSRNADHGDIVIAAIEGEFTVKRLQLRPTVQLIPMNGAYRPIPVGSEDTLDIFGVVTFIIKAVS.

Active-site for autocatalytic cleavage activity residues include Ser60 and Lys97.

The protein belongs to the peptidase S24 family.

Its function is as follows. Involved in UV protection and mutation. Essential for induced (or SOS) mutagenesis. May modify the DNA replication machinery to allow bypass synthesis across a damaged template. This chain is Protein UmuD (umuD), found in Salmonella typhimurium (strain LT2 / SGSC1412 / ATCC 700720).